The chain runs to 322 residues: MIDLFRRYYRENNIDPPELISKREVGYMTFSGEVIRHLKINNRFELNMLLRDAAPMHVYSSAAYYRKPDERKMPEKEWGGADLIFDLDSDHLPGSEKLSQKEMLIQIRDQTERLVSDFLIADFGIPKSSIKIYFSGNRGYHVHISDDRVYRLGSDARREITDYITGNSLDETVVRRAIDMLGIASGGWPAVVSKELGEASPANQRRESDLRKAIKRARENHSVLIDSPVTYDIHRIIRMPNTLHGKSGLIVKEVEIDHLGEFDPFQECIPDQFRDGEYDVFLPEKIKPVEIGGIESPKMPGKHRVKTFMAVYLVASGRAVFP.

Catalysis depends on residues D86, D88, and D226.

The protein belongs to the eukaryotic-type primase small subunit family. In terms of assembly, heterodimer of a small subunit (PriS) and a large subunit (PriL). Mg(2+) is required as a cofactor. The cofactor is Mn(2+).

Its function is as follows. Catalytic subunit of DNA primase, an RNA polymerase that catalyzes the synthesis of short RNA molecules used as primers for DNA polymerase during DNA replication. The small subunit contains the primase catalytic core and has DNA synthesis activity on its own. Binding to the large subunit stabilizes and modulates the activity, increasing the rate of DNA synthesis while decreasing the length of the DNA fragments, and conferring RNA synthesis capability. The DNA polymerase activity may enable DNA primase to also catalyze primer extension after primer synthesis. May also play a role in DNA repair. This Thermoplasma acidophilum (strain ATCC 25905 / DSM 1728 / JCM 9062 / NBRC 15155 / AMRC-C165) protein is DNA primase small subunit PriS.